Here is a 386-residue protein sequence, read N- to C-terminus: Lipid-A-disaccharide synthase (386 aa).

The protein belongs to the LpxB family.

The catalysed reaction is a lipid X + a UDP-2-N,3-O-bis[(3R)-3-hydroxyacyl]-alpha-D-glucosamine = a lipid A disaccharide + UDP + H(+). Its pathway is bacterial outer membrane biogenesis; LPS lipid A biosynthesis. Functionally, condensation of UDP-2,3-diacylglucosamine and 2,3-diacylglucosamine-1-phosphate to form lipid A disaccharide, a precursor of lipid A, a phosphorylated glycolipid that anchors the lipopolysaccharide to the outer membrane of the cell. This chain is Lipid-A-disaccharide synthase, found in Chromobacterium violaceum (strain ATCC 12472 / DSM 30191 / JCM 1249 / CCUG 213 / NBRC 12614 / NCIMB 9131 / NCTC 9757 / MK).